We begin with the raw amino-acid sequence, 266 residues long: Indole-3-glycerol phosphate synthase (266 aa).

It belongs to the TrpC family.

The enzyme catalyses 1-(2-carboxyphenylamino)-1-deoxy-D-ribulose 5-phosphate + H(+) = (1S,2R)-1-C-(indol-3-yl)glycerol 3-phosphate + CO2 + H2O. The protein operates within amino-acid biosynthesis; L-tryptophan biosynthesis; L-tryptophan from chorismate: step 4/5. The protein is Indole-3-glycerol phosphate synthase of Janthinobacterium sp. (strain Marseille) (Minibacterium massiliensis).